Reading from the N-terminus, the 277-residue chain is Cell death abnormality protein 2 (277 aa).

Positions 14-112 constitute an SH2 domain; the sequence is FYFPGMSRED…EASLLSAYKK (99 aa). Residues 113-173 form the SH3 1 domain; sequence PIIEVVVGTF…PANYVQVQSG (61 aa). The disordered stretch occupies residues 179–217; the sequence is RISKGTSQSSIGSSGNGAERFSSTSTSSENAEAHPTLPT. Residues 182 to 206 are compositionally biased toward low complexity; the sequence is KGTSQSSIGSSGNGAERFSSTSTSS. The SH3 2 domain maps to 214–275; the sequence is TLPTTAKVTF…PFTYIRFNTA (62 aa).

This sequence belongs to the CRK family. Interacts with ced-5 (via C-terminus which contains a candidate SH3-binding, proline-rich region). Forms a ternary complex with ced-5 and ced-12. Interacts (via SH-2 domain) with src-1 (when activated and phosphorylated at 'Tyr-416').

Its function is as follows. Required for cell migration and engulfment of cell corpses but not for programmed cell death/apoptosis. Also has a role in the migration of the 2 gonadal distal tip cells (DTCs). The sequence is that of Cell death abnormality protein 2 from Caenorhabditis briggsae.